We begin with the raw amino-acid sequence, 417 residues long: Putative competence-damage inducible protein (417 aa).

It belongs to the CinA family.

The protein is Putative competence-damage inducible protein of Shouchella clausii (strain KSM-K16) (Alkalihalobacillus clausii).